A 192-amino-acid polypeptide reads, in one-letter code: Large ribosomal subunit protein uL5 (192 aa).

This sequence belongs to the universal ribosomal protein uL5 family. In terms of assembly, part of the 50S ribosomal subunit; part of the 5S rRNA/L5/L18/L25 subcomplex. Contacts the 5S rRNA and the P site tRNA. Forms a bridge to the 30S subunit in the 70S ribosome.

Its function is as follows. This is one of the proteins that bind and probably mediate the attachment of the 5S RNA into the large ribosomal subunit, where it forms part of the central protuberance. In the 70S ribosome it contacts protein S13 of the 30S subunit (bridge B1b), connecting the 2 subunits; this bridge is implicated in subunit movement. Contacts the P site tRNA; the 5S rRNA and some of its associated proteins might help stabilize positioning of ribosome-bound tRNAs. The protein is Large ribosomal subunit protein uL5 of Mesorhizobium japonicum (strain LMG 29417 / CECT 9101 / MAFF 303099) (Mesorhizobium loti (strain MAFF 303099)).